The chain runs to 209 residues: Thiamine-phosphate synthase (209 aa).

4-amino-2-methyl-5-(diphosphooxymethyl)pyrimidine contacts are provided by residues 37–41 (QYRDK) and asparagine 69. Aspartate 70 and aspartate 89 together coordinate Mg(2+). Serine 108 serves as a coordination point for 4-amino-2-methyl-5-(diphosphooxymethyl)pyrimidine. Residue 135–137 (SPT) participates in 2-[(2R,5Z)-2-carboxy-4-methylthiazol-5(2H)-ylidene]ethyl phosphate binding. A 4-amino-2-methyl-5-(diphosphooxymethyl)pyrimidine-binding site is contributed by lysine 138. Residues glycine 165 and 185-186 (VS) each bind 2-[(2R,5Z)-2-carboxy-4-methylthiazol-5(2H)-ylidene]ethyl phosphate.

Belongs to the thiamine-phosphate synthase family. Requires Mg(2+) as cofactor.

The enzyme catalyses 2-[(2R,5Z)-2-carboxy-4-methylthiazol-5(2H)-ylidene]ethyl phosphate + 4-amino-2-methyl-5-(diphosphooxymethyl)pyrimidine + 2 H(+) = thiamine phosphate + CO2 + diphosphate. The catalysed reaction is 2-(2-carboxy-4-methylthiazol-5-yl)ethyl phosphate + 4-amino-2-methyl-5-(diphosphooxymethyl)pyrimidine + 2 H(+) = thiamine phosphate + CO2 + diphosphate. It catalyses the reaction 4-methyl-5-(2-phosphooxyethyl)-thiazole + 4-amino-2-methyl-5-(diphosphooxymethyl)pyrimidine + H(+) = thiamine phosphate + diphosphate. It functions in the pathway cofactor biosynthesis; thiamine diphosphate biosynthesis; thiamine phosphate from 4-amino-2-methyl-5-diphosphomethylpyrimidine and 4-methyl-5-(2-phosphoethyl)-thiazole: step 1/1. Condenses 4-methyl-5-(beta-hydroxyethyl)thiazole monophosphate (THZ-P) and 2-methyl-4-amino-5-hydroxymethyl pyrimidine pyrophosphate (HMP-PP) to form thiamine monophosphate (TMP). The chain is Thiamine-phosphate synthase from Halorhodospira halophila (strain DSM 244 / SL1) (Ectothiorhodospira halophila (strain DSM 244 / SL1)).